The chain runs to 402 residues: LIM homeobox transcription factor 1-beta (402 aa).

2 consecutive LIM zinc-binding domains span residues 56–106 (CEGC…CKQD) and 115–168 (CSGC…CKGD). Disordered stretches follow at residues 176–229 (LSSV…LTTQ) and 326–346 (PYGS…PGDH). The homeobox DNA-binding region spans 219–278 (PKRPRTILTTQQRRAFKASFEVSSKPCRKVRETLAAETGLSVRVVQVWFQNQRAKMKKLA). Positions 326-338 (PYGSSDPFQQGLT) are enriched in polar residues.

Interacts with DHX9. Expressed in most tissues. Highest levels in testis, thyroid, duodenum, skeletal muscle, and pancreatic islets.

Its subcellular location is the nucleus. In terms of biological role, transcription factor involved in the regulation of podocyte-expressed genes. Essential for the specification of dorsal limb fate at both the zeugopodal and autopodal levels. The sequence is that of LIM homeobox transcription factor 1-beta (LMX1B) from Homo sapiens (Human).